A 367-amino-acid chain; its full sequence is Fructose-1,6-bisphosphatase class 1 3 (367 aa).

Belongs to the FBPase class 1 family. As to quaternary structure, homotetramer.

The protein localises to the cytoplasm. It carries out the reaction beta-D-fructose 1,6-bisphosphate + H2O = beta-D-fructose 6-phosphate + phosphate. The protein operates within carbohydrate biosynthesis; gluconeogenesis. This chain is Fructose-1,6-bisphosphatase class 1 3, found in Paraburkholderia phymatum (strain DSM 17167 / CIP 108236 / LMG 21445 / STM815) (Burkholderia phymatum).